A 217-amino-acid polypeptide reads, in one-letter code: MGQKVNPTGLRVGIIRDWEAKWYAEKDFAAYLNEDLRIRKYIEQRLADASVSTVEIERAANRVNISIHTAKPGMVIGKGGSEVEALRKELNNLTGKRVHINIIEIKKPDLDAKLVGESIARQLEGRVAFRRAMRGAMQRTMRSGAKGIKTQVAGRLNGADMSRVEAYSDGTVPLHTLRADIDYSWVEARTTYGKLGVKTWIYRGEILPEKKSAKGGN.

A KH type-2 domain is found at 38-106 (IRKYIEQRLA…RVHINIIEIK (69 aa)).

Belongs to the universal ribosomal protein uS3 family. Part of the 30S ribosomal subunit. Forms a tight complex with proteins S10 and S14.

Its function is as follows. Binds the lower part of the 30S subunit head. Binds mRNA in the 70S ribosome, positioning it for translation. This is Small ribosomal subunit protein uS3 from Lactiplantibacillus plantarum (strain ATCC BAA-793 / NCIMB 8826 / WCFS1) (Lactobacillus plantarum).